The primary structure comprises 447 residues: Polyamine export protein (447 aa).

The Cytoplasmic portion of the chain corresponds to 1 to 4 (MLNS). A CNNM transmembrane domain is found at 1–197 (MLNSILVILC…ALAGVLRKQE (197 aa)). A helical transmembrane segment spans residues 5–25 (ILVILCLIAVSAFFSMSEISL). Residues 26–54 (AASRKIKLKLLADEGNINAQRVLNMQENP) lie on the Periplasmic side of the membrane. A helical transmembrane segment spans residues 55–75 (GMFFTVVQIGLNAVAILGGIV). Residues 76–99 (GDAAFSPAFHSLFSRYMSAELSEQ) are Cytoplasmic-facing. Residues 100–120 (LSFILSFSLVTGMFILFADLT) form a helical membrane-spanning segment. Over 121 to 141 (PKRIGMIAPEAVALRIINPMR) the chain is Periplasmic. A helical transmembrane segment spans residues 142-162 (FCLYVCTPLVWFFNGLANIIF). Topologically, residues 163 to 447 (RIFKLPMVRK…DAKDKEESVA (285 aa)) are cytoplasmic. CBS domains follow at residues 216–275 (MTPR…NQSL) and 282–343 (QIRN…GLEE).

This sequence belongs to the UPF0053 family. PaeA subfamily.

Its subcellular location is the cell inner membrane. Involved in cadaverine and putrescine tolerance in stationary phase. May facilitate the efflux of both cadaverine and putrescine from the cytoplasm, reducing potentially toxic levels under certain stress conditions. In Escherichia coli O157:H7, this protein is Polyamine export protein.